The following is a 661-amino-acid chain: Peroxisomal acyl-coenzyme A oxidase 1 (661 aa).

A Phosphoserine modification is found at S26. K65 is modified (N6-acetyllysine). K89 carries the post-translational modification N6-succinyllysine. T139 contributes to the FAD binding site. K159 is subject to N6-succinyllysine. Residue G178 coordinates FAD. Residue K216 is modified to N6-acetyllysine. K241 is modified (N6-succinyllysine). Residues K255, K267, and K272 each carry the N6-acetyllysine modification. K349 is modified (N6-succinyllysine). Residue E421 is the Proton acceptor of the active site. N6-acetyllysine; alternate is present on residues K437 and K446. 2 positions are modified to N6-succinyllysine; alternate: K437 and K446. K500 is modified (N6-acetyllysine). The residue at position 512 (K512) is an N6-acetyllysine; alternate. K512 carries the post-translational modification N6-succinyllysine; alternate. K542 is subject to N6-succinyllysine. N6-acetyllysine; alternate is present on K637. The residue at position 637 (K637) is an N6-succinyllysine; alternate. N6-succinyllysine is present on K643. At S649 the chain carries Phosphoserine. K652 bears the N6-acetyllysine mark. N6-succinyllysine is present on K655. Residues 659–661 carry the Microbody targeting signal motif; that stretch reads SKL.

This sequence belongs to the acyl-CoA oxidase family. As to quaternary structure, homodimer. Interacts with LONP2. The cofactor is FAD.

It is found in the peroxisome. The catalysed reaction is a 2,3-saturated acyl-CoA + O2 = a (2E)-enoyl-CoA + H2O2. It carries out the reaction hexadecanoyl-CoA + O2 = (2E)-hexadecenoyl-CoA + H2O2. The enzyme catalyses dodecanoyl-CoA + O2 = (2E)-dodecenoyl-CoA + H2O2. It catalyses the reaction octanoyl-CoA + O2 = (2E)-octenoyl-CoA + H2O2. The catalysed reaction is decanoyl-CoA + O2 = (2E)-decenoyl-CoA + H2O2. It carries out the reaction tetradecanoyl-CoA + O2 = (2E)-tetradecenoyl-CoA + H2O2. The enzyme catalyses hexadecanedioyl-CoA + O2 = (2E)-hexadecenedioyl-CoA + H2O2. It catalyses the reaction tetracosanoyl-CoA + O2 = (2E)-tetracosenoyl-CoA + H2O2. The catalysed reaction is glutaryl-CoA + O2 = (2E)-glutaconyl-CoA + H2O2. It carries out the reaction hexanoyl-CoA + O2 = (2E)-hexenoyl-CoA + H2O2. The enzyme catalyses octadecanoyl-CoA + O2 = (2E)-octadecenoyl-CoA + H2O2. It catalyses the reaction (5Z,8Z,11Z,14Z,17Z)-eicosapentaenoyl-CoA + O2 = (2E,5Z,8Z,11Z,14Z,17Z)-icosahexaenoyl-CoA + H2O2. The catalysed reaction is (6Z,9Z,12Z,15Z,18Z,21Z)-tetracosahexaenoyl-CoA + O2 = (2E,6Z,9Z,12Z,15Z,18Z,21Z)-tetracosaheptaenoyl-CoA + H2O2. The protein operates within lipid metabolism; peroxisomal fatty acid beta-oxidation. Involved in the initial and rate-limiting step of peroxisomal beta-oxidation of straight-chain saturated and unsaturated very-long-chain fatty acids. Catalyzes the desaturation of fatty acyl-CoAs such as palmitoyl-CoA (hexadecanoyl-CoA) to 2-trans-enoyl-CoAs ((2E)-enoyl-CoAs) such as (2E)-hexadecenoyl-CoA, and donates electrons directly to molecular oxygen (O(2)), thereby producing hydrogen peroxide (H(2)O(2)). In Cavia porcellus (Guinea pig), this protein is Peroxisomal acyl-coenzyme A oxidase 1.